Reading from the N-terminus, the 162-residue chain is Protein A49 (162 aa).

Belongs to the poxviridae A49 protein family.

In Homo sapiens (Human), this protein is Protein A49.